A 436-amino-acid polypeptide reads, in one-letter code: Trigger factor (436 aa).

The PPIase FKBP-type domain occupies 161–255 (DDVAIIDFKT…VKEVREKQLP (95 aa)).

This sequence belongs to the FKBP-type PPIase family. Tig subfamily.

It localises to the cytoplasm. The enzyme catalyses [protein]-peptidylproline (omega=180) = [protein]-peptidylproline (omega=0). Functionally, involved in protein export. Acts as a chaperone by maintaining the newly synthesized protein in an open conformation. Functions as a peptidyl-prolyl cis-trans isomerase. This chain is Trigger factor, found in Akkermansia muciniphila (strain ATCC BAA-835 / DSM 22959 / JCM 33894 / BCRC 81048 / CCUG 64013 / CIP 107961 / Muc).